A 418-amino-acid polypeptide reads, in one-letter code: UDP-N-acetylglucosamine 1-carboxyvinyltransferase (418 aa).

A phosphoenolpyruvate-binding site is contributed by 22–23 (KN). R92 is a binding site for UDP-N-acetyl-alpha-D-glucosamine. The active-site Proton donor is the C116. At C116 the chain carries 2-(S-cysteinyl)pyruvic acid O-phosphothioketal. UDP-N-acetyl-alpha-D-glucosamine is bound by residues 121 to 125 (RPVDQ), D306, and I328.

The protein belongs to the EPSP synthase family. MurA subfamily.

Its subcellular location is the cytoplasm. The enzyme catalyses phosphoenolpyruvate + UDP-N-acetyl-alpha-D-glucosamine = UDP-N-acetyl-3-O-(1-carboxyvinyl)-alpha-D-glucosamine + phosphate. The protein operates within cell wall biogenesis; peptidoglycan biosynthesis. Cell wall formation. Adds enolpyruvyl to UDP-N-acetylglucosamine. This is UDP-N-acetylglucosamine 1-carboxyvinyltransferase from Acinetobacter baylyi (strain ATCC 33305 / BD413 / ADP1).